Reading from the N-terminus, the 180-residue chain is Nucleoside-triphosphatase THEP1 (180 aa).

ATP-binding positions include 18 to 25 (GRPGVGKT) and 104 to 111 (LVIMDEIG).

Belongs to the THEP1 NTPase family.

The enzyme catalyses a ribonucleoside 5'-triphosphate + H2O = a ribonucleoside 5'-diphosphate + phosphate + H(+). In terms of biological role, has nucleotide phosphatase activity towards ATP, GTP, CTP, TTP and UTP. May hydrolyze nucleoside diphosphates with lower efficiency. The chain is Nucleoside-triphosphatase THEP1 from Metallosphaera sedula (strain ATCC 51363 / DSM 5348 / JCM 9185 / NBRC 15509 / TH2).